The following is a 303-amino-acid chain: Ribosomal RNA small subunit methyltransferase H (303 aa).

S-adenosyl-L-methionine is bound by residues 33 to 35 (GGH), aspartate 52, phenylalanine 78, aspartate 99, and glutamine 106.

The protein belongs to the methyltransferase superfamily. RsmH family.

It is found in the cytoplasm. It catalyses the reaction cytidine(1402) in 16S rRNA + S-adenosyl-L-methionine = N(4)-methylcytidine(1402) in 16S rRNA + S-adenosyl-L-homocysteine + H(+). Functionally, specifically methylates the N4 position of cytidine in position 1402 (C1402) of 16S rRNA. The polypeptide is Ribosomal RNA small subunit methyltransferase H (Phytoplasma australiense).